The following is a 516-amino-acid chain: Cytochrome P450 monooxygenase lcsI (516 aa).

A helical transmembrane segment spans residues 20–42 (ICVAAGCAFALSLLYLYVRALYL). N-linked (GlcNAc...) asparagine glycosylation is found at Asn131, Asn184, Asn415, Asn420, and Asn442. Cys456 is a binding site for heme.

It belongs to the cytochrome P450 family. Heme serves as cofactor.

The protein resides in the membrane. It participates in secondary metabolite biosynthesis. Cytochrome P450 monooxygenase; part of the gene cluster that mediates the biosynthesis of the lipopeptide antibiotics leucinostatins that show extensive biological activities, including antimalarial, antiviral, antibacterial, antifungal, and antitumor activities, as well as phytotoxic. Leucinostatin A contains nine amino acid residues, including the unusual amino acid 4-methyl-L-proline (MePro), 2-amino-6-hydroxy-4-methyl-8-oxodecanoic acid (AHyMeOA), 3-hydroxyleucine (HyLeu), alpha-aminoisobutyric acid (AIB), beta-Ala, a 4-methylhex-2-enoic acid at the N-terminus as well as a N1,N1-dimethylpropane-1,2-diamine (DPD) at the C-terminus. The biosynthesis of leucinostatins is probably initiated with the assembly of 4-methylhex-2-enoic acid by a reducing PKS. Two reducing polyketide synthases, lcsB and lcsC, have been identified in the cluster and it is not clear which is the one that assembles 4-methylhex-2-enoic acid since both contain KS, AT, DH, cMT, ER, KR and ACP domains. The polyketide residue might be transferred to the NRPS lcsA, mediated by two additional enzymes, the acyl-CoA ligase lcsD and the thioesterase lcsE. The linear polyketide carboxylic acid, which is released from PKS, is converted to a CoA thioester by lcsD, and then lcsE hydrolyzes the thiol bond and shuttles the polyketide intermediate to lcsA. The C domain of the first module catalyzed the condensation of 4-methylhex-2-enoic acid and MePro carried by domain A1, followed by successive condensations of nine amino acids to trigger the elongation of the linear peptide. A5 and A6 domains of lcsA are proposed to incorporate leucine, A2 AHyMeOA, and A3 incorporates HyLeu. A4, A7 and A8 incorporate AIB. The AHyMeOA in leucinostatin A activated by the A2 might be produced by the second PKS (lcsB or lcsC) present within the cluster. The MePro is probably produced via leucine cyclization and may originate from a separate pathway, independent of the cluster. Another nonproteinogenic amino acid, beta-Ala, could be produced by an aspartic acid decarboxylase also localized outside of the cluster. Two candidates are VFPBJ_01400 and VFPBJ_10476. The final peptide scaffold may be released by the NAD(P)H-dependent thioester reductase (TE) at the C-terminal region of lcsA. Transamination of the lcsA product by the transaminase lcsP may produce DPD at the C-terminus. Further hydroxylation steps performed alternatively by the cytochrome P450 monooxygenases lcsI, lcsK and lcsN then yield the non-methylated leucinostatins precursor. It is also possible that leucines can be hydroxylated prior to their incorporation into the peptide. Varying extents of methylation then lead to the formation of leucinostatins A and B. This Purpureocillium lilacinum (Paecilomyces lilacinus) protein is Cytochrome P450 monooxygenase lcsI.